Reading from the N-terminus, the 451-residue chain is Adenylyltransferase and sulfurtransferase MOCS3 (451 aa).

T60 bears the Phosphothreonine mark. ATP is bound by residues G99, D120, 127–131 (SNFHR), K144, and 188–189 (DN). Zn(2+)-binding residues include C229 and C232. Residue C246 is the Glycyl thioester intermediate; for adenylyltransferase activity of the active site. C304 and C307 together coordinate Zn(2+). In terms of domain architecture, Rhodanese spans 353–449 (QQQPHLLIDV…WTHKVDPSFP (97 aa)). The active-site Cysteine persulfide intermediate; for sulfurtransferase activity is C408.

In the N-terminal section; belongs to the HesA/MoeB/ThiF family. UBA4 subfamily. The cofactor is Zn(2+).

It is found in the cytoplasm. Its subcellular location is the cytosol. The catalysed reaction is [molybdopterin-synthase sulfur-carrier protein]-C-terminal Gly-Gly + ATP + H(+) = [molybdopterin-synthase sulfur-carrier protein]-C-terminal Gly-Gly-AMP + diphosphate. It carries out the reaction [molybdopterin-synthase sulfur-carrier protein]-C-terminal Gly-Gly-AMP + S-sulfanyl-L-cysteinyl-[cysteine desulfurase] + AH2 = [molybdopterin-synthase sulfur-carrier protein]-C-terminal-Gly-aminoethanethioate + L-cysteinyl-[cysteine desulfurase] + A + AMP + 2 H(+). Its pathway is tRNA modification; 5-methoxycarbonylmethyl-2-thiouridine-tRNA biosynthesis. It functions in the pathway cofactor biosynthesis; molybdopterin biosynthesis. Its function is as follows. Plays a central role in 2-thiolation of mcm(5)S(2)U at tRNA wobble positions of cytosolic tRNA(Lys), tRNA(Glu) and tRNA(Gln). Also essential during biosynthesis of the molybdenum cofactor. Acts by mediating the C-terminal thiocarboxylation of sulfur carriers URM1 and MOCS2A. Its N-terminus first activates URM1 and MOCS2A as acyl-adenylates (-COAMP), then the persulfide sulfur on the catalytic cysteine is transferred to URM1 and MOCS2A to form thiocarboxylation (-COSH) of their C-terminus. The reaction probably involves hydrogen sulfide that is generated from the persulfide intermediate and that acts as a nucleophile towards URM1 and MOCS2A. Subsequently, a transient disulfide bond is formed. Does not use thiosulfate as sulfur donor; NFS1 probably acting as a sulfur donor for thiocarboxylation reactions. The protein is Adenylyltransferase and sulfurtransferase MOCS3 of Drosophila ananassae (Fruit fly).